A 232-amino-acid polypeptide reads, in one-letter code: Large ribosomal subunit protein uL1 (232 aa).

Belongs to the universal ribosomal protein uL1 family. In terms of assembly, part of the 50S ribosomal subunit.

Binds directly to 23S rRNA. The L1 stalk is quite mobile in the ribosome, and is involved in E site tRNA release. In terms of biological role, protein L1 is also a translational repressor protein, it controls the translation of the L11 operon by binding to its mRNA. The sequence is that of Large ribosomal subunit protein uL1 from Paraburkholderia phytofirmans (strain DSM 17436 / LMG 22146 / PsJN) (Burkholderia phytofirmans).